The chain runs to 76 residues: Acyl carrier protein (76 aa).

A Carrier domain is found at Met-1–Gln-76. An O-(pantetheine 4'-phosphoryl)serine modification is found at Ser-36.

It belongs to the acyl carrier protein (ACP) family. 4'-phosphopantetheine is transferred from CoA to a specific serine of apo-ACP by AcpS. This modification is essential for activity because fatty acids are bound in thioester linkage to the sulfhydryl of the prosthetic group.

The protein localises to the cytoplasm. Its pathway is lipid metabolism; fatty acid biosynthesis. Carrier of the growing fatty acid chain in fatty acid biosynthesis. This Oleidesulfovibrio alaskensis (strain ATCC BAA-1058 / DSM 17464 / G20) (Desulfovibrio alaskensis) protein is Acyl carrier protein.